The following is a 119-amino-acid chain: Large ribosomal subunit protein uL18 (119 aa).

This sequence belongs to the universal ribosomal protein uL18 family. Part of the 50S ribosomal subunit; part of the 5S rRNA/L5/L18/L25 subcomplex. Contacts the 5S and 23S rRNAs.

Its function is as follows. This is one of the proteins that bind and probably mediate the attachment of the 5S RNA into the large ribosomal subunit, where it forms part of the central protuberance. The protein is Large ribosomal subunit protein uL18 of Legionella pneumophila (strain Paris).